A 100-amino-acid chain; its full sequence is Large ribosomal subunit protein uL23 (100 aa).

Belongs to the universal ribosomal protein uL23 family. As to quaternary structure, part of the 50S ribosomal subunit. Contacts protein L29, and trigger factor when it is bound to the ribosome.

One of the early assembly proteins it binds 23S rRNA. One of the proteins that surrounds the polypeptide exit tunnel on the outside of the ribosome. Forms the main docking site for trigger factor binding to the ribosome. This Pseudoalteromonas atlantica (strain T6c / ATCC BAA-1087) protein is Large ribosomal subunit protein uL23.